A 476-amino-acid polypeptide reads, in one-letter code: Adenosylhomocysteinase (476 aa).

Substrate is bound by residues Thr-67, Asp-142, and Glu-202. Thr-203–Thr-205 is an NAD(+) binding site. Residues Lys-232 and Asp-236 each coordinate substrate. NAD(+) contacts are provided by residues Asn-237, Gly-266–Gly-271, Glu-289, Asn-324, Ile-345–His-347, and Asn-390.

This sequence belongs to the adenosylhomocysteinase family. Requires NAD(+) as cofactor.

It is found in the cytoplasm. The enzyme catalyses S-adenosyl-L-homocysteine + H2O = L-homocysteine + adenosine. It functions in the pathway amino-acid biosynthesis; L-homocysteine biosynthesis; L-homocysteine from S-adenosyl-L-homocysteine: step 1/1. May play a key role in the regulation of the intracellular concentration of adenosylhomocysteine. This chain is Adenosylhomocysteinase, found in Prochlorococcus marinus (strain MIT 9211).